Here is a 348-residue protein sequence, read N- to C-terminus: Alcohol dehydrogenase 2 (348 aa).

The residue at position 2 (S2) is an N-acetylserine. C44 is a Zn(2+) binding site. Residues H45, T46, and H49 each coordinate NAD(+). Zn(2+)-binding residues include H67, E68, C98, C101, C104, C112, and C154. Positions 181, 182, 183, 202, and 207 each coordinate NAD(+). S213 carries the phosphoserine modification. Residue F222 coordinates NAD(+). Residue T223 is modified to Phosphothreonine. Residues K226 and K234 each participate in a glycyl lysine isopeptide (Lys-Gly) (interchain with G-Cter in ubiquitin) cross-link. V269 is an NAD(+) binding site. A Phosphoserine modification is found at S279. K287 is covalently cross-linked (Glycyl lysine isopeptide (Lys-Gly) (interchain with G-Cter in ubiquitin)). NAD(+) is bound by residues S294 and V296. Position 316 is a phosphoserine (S316). K319 participates in a covalent cross-link: Glycyl lysine isopeptide (Lys-Gly) (interchain with G-Cter in ubiquitin). Residue R341 coordinates NAD(+).

It belongs to the zinc-containing alcohol dehydrogenase family. Homotetramer. The cofactor is Zn(2+).

The protein resides in the cytoplasm. The enzyme catalyses a primary alcohol + NAD(+) = an aldehyde + NADH + H(+). It carries out the reaction a secondary alcohol + NAD(+) = a ketone + NADH + H(+). It catalyses the reaction ethanol + NAD(+) = acetaldehyde + NADH + H(+). The catalysed reaction is butan-1-ol + NAD(+) = butanal + NADH + H(+). The enzyme catalyses hexan-1-ol + NAD(+) = hexanal + NADH + H(+). Functionally, preferentially oxidative, glucose-repressed isozyme that catalyzes the conversion of ethanol to acetaldehyde. Main enzyme involved in ethanol consumption. Acts on a variety of primary unbranched aliphatic alcohols. Also produces ethanol from glucose, albeit less than ADH1. The chain is Alcohol dehydrogenase 2 (ADH2) from Saccharomyces cerevisiae (strain ATCC 204508 / S288c) (Baker's yeast).